The sequence spans 2499 residues: Probable polyketide synthase 22 (2499 aa).

In terms of domain architecture, Ketosynthase family 3 (KS3) spans D11–E430. Residues C177, H316, and H354 each act as for beta-ketoacyl synthase activity in the active site. Residues G623 to Y656 form an acyl/malonyl transferases region. S633 acts as the For acyl/malonyl transferase activity in catalysis. The segment at A922–V1044 is N-terminal hotdog fold. Residues A922–E1209 enclose the PKS/mFAS DH domain. H956 functions as the Proton acceptor; for dehydratase activity in the catalytic mechanism. Residues N1059–E1209 are C-terminal hotdog fold. The active-site Proton donor; for dehydratase activity is the D1121. The region spanning E2414–V2491 is the Carrier domain. S2451 bears the O-(pantetheine 4'-phosphoryl)serine mark.

The cofactor is pantetheine 4'-phosphate.

In terms of biological role, probable polyketide synthase. This chain is Probable polyketide synthase 22 (pks22), found in Dictyostelium discoideum (Social amoeba).